Consider the following 100-residue polypeptide: Large ribosomal subunit protein bL21 (100 aa).

Belongs to the bacterial ribosomal protein bL21 family. Part of the 50S ribosomal subunit. Contacts protein L20.

Its function is as follows. This protein binds to 23S rRNA in the presence of protein L20. This chain is Large ribosomal subunit protein bL21, found in Mycoplasmopsis synoviae (strain 53) (Mycoplasma synoviae).